The sequence spans 170 residues: Der GTPase-activating protein YihI (170 aa).

2 disordered regions span residues 1–96 and 145–170; these read MKKP…LSPQ and LSYD…RGGN. Over residues 20–30 the composition is skewed to basic and acidic residues; it reads TREELNQEARD. Positions 31–40 are enriched in basic residues; sequence RKRLKKHRGH. Positions 147 to 159 are enriched in acidic residues; sequence YDDEEDEEEDEKQ.

This sequence belongs to the YihI family. Interacts with Der.

A GTPase-activating protein (GAP) that modifies Der/EngA GTPase function. May play a role in ribosome biogenesis. This is Der GTPase-activating protein YihI from Salmonella arizonae (strain ATCC BAA-731 / CDC346-86 / RSK2980).